The chain runs to 391 residues: Somatostatin receptor type 1 (391 aa).

The interval 1 to 50 (MFPNGTASSPSSSPSPSPGSCGEGACSRGPGSGAADGMEEPGRNASQNGT) is disordered. Residues 1-56 (MFPNGTASSPSSSPSPSPGSCGEGACSRGPGSGAADGMEEPGRNASQNGTLSEGQG) lie on the Extracellular side of the membrane. A glycan (N-linked (GlcNAc...) asparagine) is linked at Asn-4. The span at 8–20 (SSPSSSPSPSPGS) shows a compositional bias: low complexity. Residues Asn-44 and Asn-48 are each glycosylated (N-linked (GlcNAc...) asparagine). The chain crosses the membrane as a helical span at residues 57-84 (SAILISFIYSVVCLVGLCGNSMVIYVIL). Topologically, residues 85-94 (RYAKMKTATN) are cytoplasmic. The chain crosses the membrane as a helical span at residues 95-120 (IYILNLAIADELLMLSVPFLVTSTLL). At 121 to 131 (RHWPFGALLCR) the chain is on the extracellular side. The cysteines at positions 130 and 208 are disulfide-linked. The chain crosses the membrane as a helical span at residues 132 to 153 (LVLSVDAVNMFTSIYCLTVLSV). The Cytoplasmic segment spans residues 154–175 (DRYVAVVHPIKAARYRRPTVAK). The chain crosses the membrane as a helical span at residues 176–196 (VVNLGVWVLSLLVILPIVVFS). At 197–219 (RTAANSDGTVACNMLMPEPAQRW) the chain is on the extracellular side. Residues 220–244 (LVGFVLYTFLMGFLLPVGAICLCYV) form a helical membrane-spanning segment. Over 245-270 (LIIAKMRMVALKAGWQQRKRSERKIT) the chain is Cytoplasmic. The helical transmembrane segment at 271–296 (LMVMMVVMVFVICWMPFYVVQLVNVF) threads the bilayer. Over 297–303 (AEQDDAT) the chain is Extracellular. Residues 304 to 327 (VSQLSVILGYANSCANPILYGFLS) form a helical membrane-spanning segment. Residues 328 to 391 (DNFKRSFQRI…GTCASRISTL (64 aa)) lie on the Cytoplasmic side of the membrane. A lipid anchor (S-palmitoyl cysteine) is attached at Cys-339.

It belongs to the G-protein coupled receptor 1 family. Jejunum and stomach.

The protein resides in the cell membrane. Functionally, receptor for somatostatin with higher affinity for somatostatin-14 than -28. This receptor is coupled via pertussis toxin sensitive G proteins to inhibition of adenylyl cyclase. In addition it stimulates phosphotyrosine phosphatase and Na(+)/H(+) exchanger via pertussis toxin insensitive G proteins. The chain is Somatostatin receptor type 1 (Sstr1) from Mus musculus (Mouse).